Consider the following 197-residue polypeptide: RILP-like protein 2 (197 aa).

The region spanning 14–96 is the RH1 domain; the sequence is EDEGALAKSP…KQEVEGLRRA (83 aa). A coiled-coil region spans residues 65-153; sequence LEALVNEGSL…VQEELQCYRS (89 aa). One can recognise an RH2 domain in the interval 119–184; that stretch reads RPRFTLQELR…GNGEKEERTI (66 aa).

In terms of assembly, homodimer. Interacts (via N-terminus) with MYO5A, the interaction is required for its role in dendrite formation. Interacts with RAC1. Interacts with RAB8A; interaction is dependent on the phosphorylation of RAB8A on 'Thr-72'. Interacts with RAB10 and RAB12; interaction is dependent on the phosphorylation of 'Thr-73' on RAB10 and 'Ser-105' on RAB12.

It localises to the cytoplasm. The protein localises to the cytosol. Its subcellular location is the cytoskeleton. The protein resides in the microtubule organizing center. It is found in the centrosome. It localises to the cell projection. The protein localises to the cilium. Involved in cell shape and neuronal morphogenesis, positively regulating the establishment and maintenance of dendritic spines. Plays a role in cellular protein transport, including protein transport away from primary cilia. May function via activation of RAC1 and PAK1. The polypeptide is RILP-like protein 2 (Rilpl2) (Rattus norvegicus (Rat)).